Consider the following 308-residue polypeptide: Transaldolase (308 aa).

K125 serves as the catalytic Schiff-base intermediate with substrate.

This sequence belongs to the transaldolase family. Type 1 subfamily. As to quaternary structure, homodimer.

Its subcellular location is the cytoplasm. It carries out the reaction D-sedoheptulose 7-phosphate + D-glyceraldehyde 3-phosphate = D-erythrose 4-phosphate + beta-D-fructose 6-phosphate. The protein operates within carbohydrate degradation; pentose phosphate pathway; D-glyceraldehyde 3-phosphate and beta-D-fructose 6-phosphate from D-ribose 5-phosphate and D-xylulose 5-phosphate (non-oxidative stage): step 2/3. In terms of biological role, transaldolase is important for the balance of metabolites in the pentose-phosphate pathway. This is Transaldolase from Ectopseudomonas mendocina (strain ymp) (Pseudomonas mendocina).